Consider the following 397-residue polypeptide: Leucine carboxyl methyltransferase 1 (397 aa).

The segment at 17 to 61 (AIQTPPPTDPNAAPAHRPAPRPALGRCRPPHRRRRRLRPPVRPPL) is disordered. Over residues 26–43 (PNAAPAHRPAPRPALGRC) the composition is skewed to low complexity. Residues 44-55 (RPPHRRRRRLRP) are compositionally biased toward basic residues. Residues R119, G142, D168, 224-225 (DL), and E259 each bind S-adenosyl-L-methionine.

This sequence belongs to the methyltransferase superfamily. LCMT family.

It catalyses the reaction [phosphatase 2A protein]-C-terminal L-leucine + S-adenosyl-L-methionine = [phosphatase 2A protein]-C-terminal L-leucine methyl ester + S-adenosyl-L-homocysteine. Methylates the carboxyl group of the C-terminal leucine residue of protein phosphatase 2A catalytic subunits to form alpha-leucine ester residues. The chain is Leucine carboxyl methyltransferase 1 (PPM1) from Cryptococcus neoformans var. neoformans serotype D (strain B-3501A) (Filobasidiella neoformans).